The chain runs to 436 residues: Methylenetetrahydrofolate--tRNA-(uracil-5-)-methyltransferase TrmFO (436 aa).

Gly7–Gly12 provides a ligand contact to FAD.

This sequence belongs to the MnmG family. TrmFO subfamily. It depends on FAD as a cofactor.

It localises to the cytoplasm. It carries out the reaction uridine(54) in tRNA + (6R)-5,10-methylene-5,6,7,8-tetrahydrofolate + NADH + H(+) = 5-methyluridine(54) in tRNA + (6S)-5,6,7,8-tetrahydrofolate + NAD(+). The enzyme catalyses uridine(54) in tRNA + (6R)-5,10-methylene-5,6,7,8-tetrahydrofolate + NADPH + H(+) = 5-methyluridine(54) in tRNA + (6S)-5,6,7,8-tetrahydrofolate + NADP(+). Functionally, catalyzes the folate-dependent formation of 5-methyl-uridine at position 54 (M-5-U54) in all tRNAs. The protein is Methylenetetrahydrofolate--tRNA-(uracil-5-)-methyltransferase TrmFO of Caldicellulosiruptor bescii (strain ATCC BAA-1888 / DSM 6725 / KCTC 15123 / Z-1320) (Anaerocellum thermophilum).